Consider the following 412-residue polypeptide: Isocitrate dehydrogenase [NADP] (412 aa).

Thr-100 serves as a coordination point for NADP(+). Positions 109, 111, 115, 125, and 149 each coordinate D-threo-isocitrate. Asp-301 contacts Mg(2+). NADP(+)-binding positions include 333–339, Asn-346, Tyr-385, and Arg-389; that span reads HGSAPKY.

It belongs to the isocitrate and isopropylmalate dehydrogenases family. Homodimer. Mg(2+) serves as cofactor. Mn(2+) is required as a cofactor.

The catalysed reaction is D-threo-isocitrate + NADP(+) = 2-oxoglutarate + CO2 + NADPH. Functionally, catalyzes the oxidative decarboxylation of isocitrate to 2-oxoglutarate and carbon dioxide with the concomitant reduction of NADP(+). NAD(+) can replace NADP(+) with low efficiency. This Archaeoglobus fulgidus (strain ATCC 49558 / DSM 4304 / JCM 9628 / NBRC 100126 / VC-16) protein is Isocitrate dehydrogenase [NADP].